The following is a 458-amino-acid chain: tRNA modification GTPase MnmE (458 aa).

The (6S)-5-formyl-5,6,7,8-tetrahydrofolate site is built by arginine 22, glutamate 84, and arginine 123. The 160-residue stretch at 220–379 (GIATAIIGRP…LEKAIADLFF (160 aa)) folds into the TrmE-type G domain. Position 230 (asparagine 230) interacts with K(+). GTP is bound by residues 230–235 (NVGKSS), 249–255 (TDIAGTT), and 274–277 (DTAG). Residue serine 234 coordinates Mg(2+). K(+) is bound by residues threonine 249, isoleucine 251, and threonine 254. Residue threonine 255 coordinates Mg(2+). Lysine 458 serves as a coordination point for (6S)-5-formyl-5,6,7,8-tetrahydrofolate.

The protein belongs to the TRAFAC class TrmE-Era-EngA-EngB-Septin-like GTPase superfamily. TrmE GTPase family. In terms of assembly, homodimer. Heterotetramer of two MnmE and two MnmG subunits. Requires K(+) as cofactor.

It localises to the cytoplasm. Functionally, exhibits a very high intrinsic GTPase hydrolysis rate. Involved in the addition of a carboxymethylaminomethyl (cmnm) group at the wobble position (U34) of certain tRNAs, forming tRNA-cmnm(5)s(2)U34. In Bacillus cytotoxicus (strain DSM 22905 / CIP 110041 / 391-98 / NVH 391-98), this protein is tRNA modification GTPase MnmE.